A 251-amino-acid chain; its full sequence is 5'-nucleotidase SurE (251 aa).

4 residues coordinate a divalent metal cation: aspartate 8, aspartate 9, serine 39, and asparagine 91.

This sequence belongs to the SurE nucleotidase family. It depends on a divalent metal cation as a cofactor.

The protein resides in the cytoplasm. It carries out the reaction a ribonucleoside 5'-phosphate + H2O = a ribonucleoside + phosphate. Functionally, nucleotidase that shows phosphatase activity on nucleoside 5'-monophosphates. This Methylococcus capsulatus (strain ATCC 33009 / NCIMB 11132 / Bath) protein is 5'-nucleotidase SurE.